We begin with the raw amino-acid sequence, 299 residues long: Glutamate formimidoyltransferase (299 aa).

His-82 serves as the catalytic For formimidoyltransferase activity. 163 to 172 (GDRKIHPTAG) serves as a coordination point for folate.

This sequence belongs to the formiminotransferase family.

Its subcellular location is the cytoplasm. It catalyses the reaction (6S)-5-formyl-5,6,7,8-tetrahydrofolate + L-glutamate = N-formyl-L-glutamate + (6S)-5,6,7,8-tetrahydrofolate + H(+). The catalysed reaction is 5-formimidoyltetrahydrofolate + L-glutamate = N-formimidoyl-L-glutamate + (6S)-5,6,7,8-tetrahydrofolate. The enzyme catalyses (6S)-5-formyl-5,6,7,8-tetrahydrofolate + ATP = (6R)-5,10-methenyltetrahydrofolate + ADP + phosphate. It participates in amino-acid degradation; L-histidine degradation into L-glutamate; L-glutamate from N-formimidoyl-L-glutamate (transferase route): step 1/1. It functions in the pathway one-carbon metabolism; tetrahydrofolate interconversion. Its function is as follows. Catalyzes the transfer of the formyl group from N-formylglutamate to tetrahydrofolate (THF) to yield 5-formyltetrahydrofolate (5-CHO-THF) and glutamate (Glu). The triglutamate form of 5-CHO-THF (5-CHO-THF-Glu3) can also be used as substrate. It can also catalyze the transfer of the formimino group from N-formiminoglutamate to tetrahydrofolate (THF) to yield 5-formiminotetrahydrofolate (5-NH=CH-THF) and glutamate (Glu). It can replace YgfA to catalyze the irreversible ATP-dependent transformation of 5-CHO-THF to form 5,10-methenyltetrahydrofolate (5,10-CH=THF). The polypeptide is Glutamate formimidoyltransferase (Streptococcus pyogenes serotype M1).